A 773-amino-acid chain; its full sequence is MRRLRRWAIAALLLLPLLPPPGLGALGPRGALHWRSSAHVGSPESPEGSEVTEPSRLVRQSSGGEVRKPQLDTRVRQDPPRGTPVHLAQVSFVIPAFDSNFTLDLELNHHLLSSQYVERHFSREGTRQHSTGAGDHCYYHGKLRGNPQSFAALSTCQGLHGVFSDGNLTYIVEPKEIAGPWGPPQGPLPHLIYRTPLLPAPLGCREPGCLFAVPAQSALPNWPKLRRKRQVRRGHPTVHSETKYVELIVINDHQLFEQMRQSVVLTSNFAKSVVNLADVIYKEQLNTRIVLVAMETWADGDKIQVQDDLLETLARLMVYRREGLPEPSDATHLFSGRTFQSTSSGAAYVGGICSLSRGGGVNEYGNMGAMAVTLAQTLGQNLGMMWNKHRSSAGDCKCPDIWLGCIMEDTGFYLPRKFSRCSIDEYNQFLQEGGGSCLFNKPLKLLDPPECGNGFVEAGEECDCGSVQECSRAGGNCCKKCTLTHDAMCSDGLCCRRCKYEPRGVSCREAVNECDIAETCTGDSSQCPPNLHKLDGYYCDHEQGRCYGGRCKTRDRQCQALWGHAAADRFCYEKLNVEGTERGNCGRKGSGWVQCSKQDVLCGFLLCVNISGAPRLGDLGGDISSVTFYHQGKELDCRGGHVQLADGSDLSYVEDGTACGPNMLCLDHRCLPASAFNFSTCPGSGERRICSHHGVCSNEGKCICQPDWTGKDCSIHNPLPTSPPTGETERYKGPSGTNIIIGSIAGAVLVAAIVLGGTGWGFKNIRRGRSGGA.

The first 24 residues, 1–24 (MRRLRRWAIAALLLLPLLPPPGLG), serve as a signal peptide directing secretion. Positions 25-229 (ALGPRGALHW…PNWPKLRRKR (205 aa)) are excised as a propeptide. Residues 36–82 (SSAHVGSPESPEGSEVTEPSRLVRQSSGGEVRKPQLDTRVRQDPPRG) form a disordered region. The segment covering 65–79 (EVRKPQLDTRVRQDP) has biased composition (basic and acidic residues). N-linked (GlcNAc...) asparagine glycosylation is found at N100 and N167. At 230 to 738 (QVRRGHPTVH…ERYKGPSGTN (509 aa)) the chain is on the extracellular side. The Peptidase M12B domain maps to 243-442 (KYVELIVIND…GGGSCLFNKP (200 aa)). The required for localization to cerebellar cortex basket cell terminals. Also required for localization of KCNA1, KCNA2, DLG4 and ADAM22 to cerebellar cortex basket cell terminal perisomatic axons and pinceaux stretch occupies residues 336 to 773 (GRTFQSTSSG…NIRRGRSGGA (438 aa)). 4 cysteine pairs are disulfide-bonded: C353/C437, C396/C421, C398/C405, and C507/C527. A Disintegrin domain is found at 448–535 (PPECGNGFVE…QCPPNLHKLD (88 aa)). N-linked (GlcNAc...) asparagine glycosylation is found at N609 and N677. 3 cysteine pairs are disulfide-bonded: C681–C696, C690–C702, and C704–C713. Positions 681–713 (CPGSGERRICSHHGVCSNEGKCICQPDWTGKDC) constitute an EGF-like domain. A helical membrane pass occupies residues 739-759 (IIIGSIAGAVLVAAIVLGGTG). Over 760–773 (WGFKNIRRGRSGGA) the chain is Cytoplasmic.

Interacts with LGI1 and LGI4. Interacts with KCNA1/KV1.1, KCNA2/KV1.2, DLG4/PSD-95 and ADAM22. The precursor is cleaved by a furin endopeptidase. As to expression, abundantly expressed in cerebellar cortex basket cell terminals and pinceaux, weakly expressed in Purkinje cells (at protein level). Weakly expressed in the heart. Abundantly in expressed in neurons throughout the central nervous system including the telencephalon, diencephalic and brainstem nuclei, cerebellum and spinal cord. Expressed in the peripheral nervous system trigeminal and dorsal root ganglia. Expressed in the ganglion and bipolar cells of the retinae and weakly in the cornea of the eyes. Expressed in the hepatocytes of the parenchyma and hepatic lobules of the liver. Expressed in distinct focal areas in the juxtamedullary cortex of the kidney. Expressed in spermatocytes in the seminiferous tubules of the testes. Expressed in the stratum spinosum of the stratified squamous epithelia of the tongue and esophagus.

Its subcellular location is the presynaptic cell membrane. The protein resides in the perikaryon. It localises to the cell projection. The protein localises to the axon. Probable ligand for integrin in the brain. This is a non catalytic metalloprotease-like protein. Required for localization of the potassium channel subunit proteins KCNA1/KV1.1 and KCNA2/KV1.2 at cerebellar cortex basket cell distal terminals, is thereby involved in ephaptic inhibitory synchronization of Purkinje cell firing and response to stress. Plays a role in spatial learning and motor coordination. Involved in the nociceptive pain response to chemical-derived stimulation. The polypeptide is Disintegrin and metalloproteinase domain-containing protein 11 (Adam11) (Mus musculus (Mouse)).